The sequence spans 93 residues: Large ribosomal subunit protein uL23cz/uL23cy (93 aa).

This sequence belongs to the universal ribosomal protein uL23 family. Part of the 50S ribosomal subunit.

It is found in the plastid. Its subcellular location is the chloroplast. Its function is as follows. Binds to 23S rRNA. This Lotus japonicus (Lotus corniculatus var. japonicus) protein is Large ribosomal subunit protein uL23cz/uL23cy (rpl23-A).